The primary structure comprises 109 residues: FK506-binding protein (109 aa).

Residues 20–108 form the PPIase FKBP-type domain; the sequence is GKEITVHYTG…IFEVELLKVY (89 aa).

It belongs to the FKBP-type PPIase family.

It catalyses the reaction [protein]-peptidylproline (omega=180) = [protein]-peptidylproline (omega=0). Inhibited by FK506. PPIases accelerate the folding of proteins. The sequence is that of FK506-binding protein (fbp) from Neisseria meningitidis serogroup A / serotype 4A (strain DSM 15465 / Z2491).